Consider the following 377-residue polypeptide: Enoyl reductase cheB (377 aa).

Positions 18 to 361 are enoyl reductase (ER) domain; that stretch reads GGSLVIARDV…REISAEKLVV (344 aa). Position 49 to 52 (49 to 52) interacts with NADP(+); the sequence is CDFK. 137–144 lines the substrate pocket; sequence PCCIATMG. Residues 173–176, 200–203, tyrosine 218, 265–266, and threonine 283 contribute to the NADP(+) site; these read SSSV, SPKN, and LE. 285-289 is a binding site for substrate; sequence GAIII. 354 to 355 contributes to the NADP(+) binding site; the sequence is IS.

Belongs to the zinc-containing alcohol dehydrogenase family. It depends on heme as a cofactor.

Its pathway is secondary metabolite biosynthesis. Functionally, enoyl reductase; part of the gene cluster that mediates the biosynthesis of chaetoglobosin A which has a unique inhibitory activity against actin polymerization in mammalian cells. Chaetoglobosin A and its intermediates are involved in the morphological differentiation of C.globosum. The first step of the pathway is the synthesis of prochaetoglobosin I via condensation of one acetyl-CoA, 8 malonyl-CoA, and a L-tryptophan molecule by the PKS-NRPS hybrid synthetase cheA, followed by reduction of backbone double bond to install desired geometry by the enoyl reductase cheB. Further multiple oxidation steps performed by the cytochrome P450 monooxygenases cheE and cheG, as well as by the FAD-linked oxidoreductase cheF, lead to the formation of chaetoglobosin A. Depending on the order of action of these reductases, distinct intermediates can be identified. Within the pathway, the cytochrome P450 monooxygenase cheE catalyzes a stereospecific epoxidation on prochaetoglobosin I, cytoglobosin D, and chaetoglobosin J intermediates. The FAD-linked oxidoreductase cheF performs dehydrogenation of the C-20 hydroxyl groups in the 20-dihyrochaetoglobosin A and cytoglobosin D intermediates. Finally, the cytochrome P450 monooxygenase cheG can catalyze the stereospecific dihydroxylation of prochaetoglobosin I and prochaetoglobosin IV at C-19 and C-20, respectively. The Diels-Alderase cheD may play a role in the post-PKS-NRPS biosynthetic steps catalyzing Diels-Alder cyclization. This chain is Enoyl reductase cheB, found in Chaetomium globosum (strain ATCC 6205 / CBS 148.51 / DSM 1962 / NBRC 6347 / NRRL 1970) (Soil fungus).